The chain runs to 60 residues: Arabinogalactan protein 12 (60 aa).

A signal peptide spans 1 to 27; sequence MESMKMKLIVVLMVAIVAFSAVGNVAA. At Q28 the chain carries Pyrrolidone carboxylic acid. A 4-hydroxyproline mark is found at P32, P34, and P36. Residues P32, P34, and P36 are each glycosylated (O-linked (Ara...) hydroxyproline). Residue S38 is the site of GPI-anchor amidated serine attachment. A propeptide spans 39-60 (removed in mature form); that stretch reads DAAMFVPALFASVAALASGFLF.

The protein belongs to the AG-peptide AGP family. In terms of processing, contains 4-hydroxyproline; hydroxylated on Pro-32, Pro-34 and Pro-36. O-glycosylated on hydroxyprolines; noncontiguous hydroxylproline residues are glycosylated with arabinogalactan. Expressed in reproductive tissues. Expressed in chalaza, funiculus, stigma, septum, style and transmitting tract.

It localises to the cell membrane. Its function is as follows. Proteoglycan that seems to be implicated in diverse developmental roles such as differentiation, cell-cell recognition, embryogenesis and programmed cell death. The polypeptide is Arabinogalactan protein 12 (Arabidopsis thaliana (Mouse-ear cress)).